The chain runs to 394 residues: Protein maelstrom (394 aa).

Positions 2-69 (APKKQNGFMM…ARRDKRGSLN (68 aa)) form a DNA-binding region, HMG box. Residues 44-93 (TQQRGPYNSDAKDANAARRDKRGSLNGHGQVDKAQREAAESLMDKAQREA) are disordered. The span at 73-93 (QVDKAQREAAESLMDKAQREA) shows a compositional bias: basic and acidic residues.

Belongs to the maelstrom family.

The protein localises to the cytoplasm. It is found in the nucleus. Involved both in the piRNA and miRNA metabolic processes. As a component of the meiotic nuage, plays a central role during oogenesis by repressing transposable elements and preventing their mobilization, which is essential for the germline integrity. Repression of transposable elements is mediated via the piRNA metabolic process, which mediates the repression of transposable elements during meiosis by forming complexes composed of piRNAs and Piwi proteins and governs the repression of transposons. As a nuclear component, it is required for proper differentiation in the germline stem cell (GSC) lineage by repressing microRNA-7 (miR-7), thereby acting as an indirect regulator of bag-of-marbles (Bam). Acts by binding to the promoter of miR-7 gene and repressing its expression; miR-7 repression alleviates the Bam repression by miR-7, thereby allowing differentiation in the germline stem cell (GSC) lineage. The sequence is that of Protein maelstrom (mael) from Drosophila simulans (Fruit fly).